We begin with the raw amino-acid sequence, 187 residues long: Large ribosomal subunit protein uL22 (187 aa).

Composition is skewed to basic and acidic residues over residues 158–168 (TKATDESEQAK) and 178–187 (RQKEKMMRNE). A disordered region spans residues 158-187 (TKATDESEQAKKKLSKKKLQRQKEKMMRNE).

The protein belongs to the universal ribosomal protein uL22 family.

The protein is Large ribosomal subunit protein uL22 (RpL17) of Anopheles gambiae (African malaria mosquito).